Here is a 198-residue protein sequence, read N- to C-terminus: Ribonuclease HII (198 aa).

The region spanning 11 to 198 (NLIAGVDEVG…GPVKRVLGLV (188 aa)) is the RNase H type-2 domain. Positions 17, 18, and 109 each coordinate a divalent metal cation.

Belongs to the RNase HII family. It depends on Mn(2+) as a cofactor. The cofactor is Mg(2+).

It is found in the cytoplasm. It catalyses the reaction Endonucleolytic cleavage to 5'-phosphomonoester.. Endonuclease that specifically degrades the RNA of RNA-DNA hybrids. This chain is Ribonuclease HII, found in Yersinia pseudotuberculosis serotype O:3 (strain YPIII).